Here is a 249-residue protein sequence, read N- to C-terminus: MESCTRSSLQQLVAADSKSSNFCFRNLSQSSNNNVSYASSSNRNFVPQNVLNNEYQSFQHSSTSQPSVLRQGKNAFLKPSQLSFNMNSSEISNTHWARDFNILTSNFASSSVTSAPTQSSHISNFTNSQKYFANDLPNSLTDQPLAQPSASQRSTWLPCSAAVSTSSPSSDPFFDSYLEQAFEKAERLANEQQKISKVEKTFGTLDSIGTEQDDCFDPDYSNLPLFPQENASPPLFRKASCNSGFTTKC.

It is found in the cytoplasm. Its subcellular location is the nucleus. This is an uncharacterized protein from Schizosaccharomyces pombe (strain 972 / ATCC 24843) (Fission yeast).